The sequence spans 91 residues: Small ribosomal subunit protein bS20 (91 aa).

The interval 1–26 (MANLKSSKKDIRRTARRKERNGEDRT) is disordered.

It belongs to the bacterial ribosomal protein bS20 family.

Its function is as follows. Binds directly to 16S ribosomal RNA. The sequence is that of Small ribosomal subunit protein bS20 from Leptospira biflexa serovar Patoc (strain Patoc 1 / Ames).